The primary structure comprises 230 residues: Phosphoribosylaminoimidazole-succinocarboxamide synthase (230 aa).

The protein belongs to the SAICAR synthetase family.

The enzyme catalyses 5-amino-1-(5-phospho-D-ribosyl)imidazole-4-carboxylate + L-aspartate + ATP = (2S)-2-[5-amino-1-(5-phospho-beta-D-ribosyl)imidazole-4-carboxamido]succinate + ADP + phosphate + 2 H(+). It participates in purine metabolism; IMP biosynthesis via de novo pathway; 5-amino-1-(5-phospho-D-ribosyl)imidazole-4-carboxamide from 5-amino-1-(5-phospho-D-ribosyl)imidazole-4-carboxylate: step 1/2. This chain is Phosphoribosylaminoimidazole-succinocarboxamide synthase, found in Thermotoga sp. (strain RQ2).